The primary structure comprises 352 residues: MIRIAIDCMGGDFGLPVTIPAAIEFARQFPDTRLLLVGLPDAIEAALAERRDAPRDRLDIVPATEVVSMDDPVEVALRRKKDSSMRLAAQAVKDGRADACISAGNTGAWMAISRYVLKTLDGIDRPAIATSIPNQTGRATTVLDLGANVDCSAEHLLQFAIMGAALSQAVDHRDRPTVGLLNIGEEIIKGNEVVKEAAELLRASPLNFYGNVEGNDIFKGTVDVVVCDGFVGNVVLKSVEGLAKMLSSVIREEFKRNFITLLAGAFAKPVLNRLRNRVDNRRYNGAALLGLRGVVIKSHGSADAYAFGFALQRAREAVASKLLERTAQTVAQITQRVQSGEAVAPGAAGDTA.

Belongs to the PlsX family. In terms of assembly, homodimer. Probably interacts with PlsY.

The protein resides in the cytoplasm. It catalyses the reaction a fatty acyl-[ACP] + phosphate = an acyl phosphate + holo-[ACP]. Its pathway is lipid metabolism; phospholipid metabolism. Functionally, catalyzes the reversible formation of acyl-phosphate (acyl-PO(4)) from acyl-[acyl-carrier-protein] (acyl-ACP). This enzyme utilizes acyl-ACP as fatty acyl donor, but not acyl-CoA. This chain is Phosphate acyltransferase, found in Bordetella bronchiseptica (strain ATCC BAA-588 / NCTC 13252 / RB50) (Alcaligenes bronchisepticus).